The following is a 384-amino-acid chain: DNA replication and repair protein RecF (384 aa).

Position 30–37 (30–37 (GNNAQGKS)) interacts with ATP.

This sequence belongs to the RecF family.

It is found in the cytoplasm. Functionally, the RecF protein is involved in DNA metabolism; it is required for DNA replication and normal SOS inducibility. RecF binds preferentially to single-stranded, linear DNA. It also seems to bind ATP. This Gloeothece citriformis (strain PCC 7424) (Cyanothece sp. (strain PCC 7424)) protein is DNA replication and repair protein RecF.